The chain runs to 101 residues: Small ribosomal subunit protein uS14A (101 aa).

The protein belongs to the universal ribosomal protein uS14 family. In terms of assembly, part of the 30S ribosomal subunit. Contacts proteins S3 and S10.

In terms of biological role, binds 16S rRNA, required for the assembly of 30S particles and may also be responsible for determining the conformation of the 16S rRNA at the A site. The sequence is that of Small ribosomal subunit protein uS14A from Salinispora tropica (strain ATCC BAA-916 / DSM 44818 / JCM 13857 / NBRC 105044 / CNB-440).